A 359-amino-acid polypeptide reads, in one-letter code: Homeotic protein knotted-1 (359 aa).

2 disordered regions span residues 1–34 and 213–232; these read MEEI…PWAS and LSSG…TELP. Residues 16–31 show a composition bias toward basic residues; sequence GHGHGQHHHHHHHHHP. The ELK domain occupies 242–262; the sequence is ELKHHLLKKYSGYLSSLKQEL. A DNA-binding region (homeobox; TALE-type) is located at residues 263–326; the sequence is SKKKKKGKLP…NQRKRHWKPS (64 aa).

This sequence belongs to the TALE/KNOX homeobox family. As to quaternary structure, forms homodimers. Binds to MBP2C; this interaction reduces RNA binding capacity. In terms of tissue distribution, expressed in apical meristems of vegetative and floral stems as well as in the underlying ground meristem. Specifically expressed in vascular bundles developing both in the leaf and stem. Very low levels of expression in leaves.

The protein resides in the nucleus. It is found in the cell junction. The protein localises to the plasmodesma. It localises to the cytoplasm. Functionally, binds to RNA. Possible transcription factor that regulates genes involved in development. Mutations in KN-1 alter leaf development. Foci of cells along the lateral vein do not differentiate properly but continue to divide, forming knots. May participate in the switch from indeterminate to determinate cell fates. Probably binds to the DNA sequence 5'-TGAC-3'. The chain is Homeotic protein knotted-1 (KN-1) from Zea mays (Maize).